The primary structure comprises 352 residues: Threonine synthase (352 aa).

N6-(pyridoxal phosphate)lysine is present on Lys59. Residues Asn85, 185–189 (GNAGN), and Thr314 contribute to the pyridoxal 5'-phosphate site.

It belongs to the threonine synthase family. Pyridoxal 5'-phosphate serves as cofactor.

It carries out the reaction O-phospho-L-homoserine + H2O = L-threonine + phosphate. It functions in the pathway amino-acid biosynthesis; L-threonine biosynthesis; L-threonine from L-aspartate: step 5/5. In terms of biological role, catalyzes the gamma-elimination of phosphate from L-phosphohomoserine and the beta-addition of water to produce L-threonine. This Bacillus sp. (strain ULM1) protein is Threonine synthase (thrC).